The following is a 276-amino-acid chain: Hydroxycinnamoyl-CoA hydratase-lyase (276 aa).

Positions 29, 68, 70, and 72 each coordinate acetyl-CoA. Tyrosine 75 is a binding site for vanillin. Positions 120, 142, and 146 each coordinate acetyl-CoA. Glycine 151 and tyrosine 239 together coordinate vanillin.

The protein belongs to the enoyl-CoA hydratase/isomerase family. In terms of assembly, homohexamer; dimer of trimers.

It catalyses the reaction (E)-feruloyl-CoA + H2O = vanillin + acetyl-CoA. The catalysed reaction is (E)-caffeoyl-CoA + H2O = 3,4-dihydroxybenzaldehyde + acetyl-CoA. It carries out the reaction (E)-4-coumaroyl-CoA + H2O = 4-hydroxybenzaldehyde + acetyl-CoA. The enzyme catalyses (E)-feruloyl-CoA + H2O = 3-hydroxy-3-(4-hydroxy-3-methoxyphenyl)propanoyl-CoA. It catalyses the reaction 3-hydroxy-3-(4-hydroxy-3-methoxyphenyl)propanoyl-CoA = vanillin + acetyl-CoA. The catalysed reaction is (E)-caffeoyl-CoA + H2O = 3-hydroxy-3-(3,4-dihydroxyphenyl)propanoyl-CoA. It carries out the reaction 3-hydroxy-3-(3,4-dihydroxyphenyl)propanoyl-CoA = 3,4-dihydroxybenzaldehyde + acetyl-CoA. The enzyme catalyses (E)-4-coumaroyl-CoA + H2O = 3-hydroxy-3-(4-hydroxyphenyl)propanoyl-CoA. It catalyses the reaction 3-hydroxy-3-(4-hydroxyphenyl)propanoyl-CoA = 4-hydroxybenzaldehyde + acetyl-CoA. In terms of biological role, catalyzes the hydration of the acyl-CoA thioester of ferulic acid and the subsequent retro-aldol cleavage of the hydrated intermediate to yield vanillin (4-hydroxy-3-methoxy-benzaldehyde). The enzyme is also active with caffeoyl-CoA and 4-coumaroyl-CoA producing 3,4-dihydroxybenzaldehyde and 4-hydroxybenzaldehyde, respectively. This is Hydroxycinnamoyl-CoA hydratase-lyase from Pseudomonas fluorescens.